A 78-amino-acid chain; its full sequence is MEKQKLIDMEGVVIESLPNATFRVYLDNGCIVLTHISGKIRRNYIRILPGDRVKVELSPYDLTKGRITYRLRAKSSNN.

In terms of domain architecture, S1-like spans 1-72; the sequence is MEKQKLIDME…TKGRITYRLR (72 aa).

This sequence belongs to the IF-1 family. In terms of assembly, component of the 30S ribosomal translation pre-initiation complex which assembles on the 30S ribosome in the order IF-2 and IF-3, IF-1 and N-formylmethionyl-tRNA(fMet); mRNA recruitment can occur at any time during PIC assembly.

The protein localises to the plastid. Its subcellular location is the chloroplast. One of the essential components for the initiation of protein synthesis. Stabilizes the binding of IF-2 and IF-3 on the 30S subunit to which N-formylmethionyl-tRNA(fMet) subsequently binds. Helps modulate mRNA selection, yielding the 30S pre-initiation complex (PIC). Upon addition of the 50S ribosomal subunit IF-1, IF-2 and IF-3 are released leaving the mature 70S translation initiation complex. The chain is Translation initiation factor IF-1, chloroplastic from Marchantia polymorpha (Common liverwort).